The following is a 463-amino-acid chain: L-seryl-tRNA(Sec) selenium transferase (463 aa).

K295 carries the post-translational modification N6-(pyridoxal phosphate)lysine.

Belongs to the SelA family. Homodecamer; pentamer of dimers. Binds only one seryl-tRNA(Sec) per dimer. Pyridoxal 5'-phosphate serves as cofactor.

It is found in the cytoplasm. The enzyme catalyses L-seryl-tRNA(Sec) + selenophosphate + H(+) = L-selenocysteinyl-tRNA(Sec) + phosphate. The protein operates within aminoacyl-tRNA biosynthesis; selenocysteinyl-tRNA(Sec) biosynthesis; selenocysteinyl-tRNA(Sec) from L-seryl-tRNA(Sec) (bacterial route): step 1/1. Its function is as follows. Converts seryl-tRNA(Sec) to selenocysteinyl-tRNA(Sec) required for selenoprotein biosynthesis. In Salmonella paratyphi A (strain AKU_12601), this protein is L-seryl-tRNA(Sec) selenium transferase.